The following is a 382-amino-acid chain: D-galactonate dehydratase (382 aa).

Residue aspartate 183 participates in Mg(2+) binding. Histidine 185 serves as the catalytic Proton donor. Mg(2+) contacts are provided by glutamate 209 and glutamate 235. Histidine 285 (proton acceptor) is an active-site residue. The disordered stretch occupies residues 361 to 382 (NENPPDWRNPVWRHSDGSIAEW).

It belongs to the mandelate racemase/muconate lactonizing enzyme family. GalD subfamily. Requires Mg(2+) as cofactor.

It catalyses the reaction D-galactonate = 2-dehydro-3-deoxy-D-galactonate + H2O. It participates in carbohydrate acid metabolism; D-galactonate degradation; D-glyceraldehyde 3-phosphate and pyruvate from D-galactonate: step 1/3. In terms of biological role, catalyzes the dehydration of D-galactonate to 2-keto-3-deoxy-D-galactonate. In Xanthomonas euvesicatoria pv. vesicatoria (strain 85-10) (Xanthomonas campestris pv. vesicatoria), this protein is D-galactonate dehydratase.